Reading from the N-terminus, the 411-residue chain is Dual-specificity RNA methyltransferase RlmN (411 aa).

The active-site Proton acceptor is Glu124. One can recognise a Radical SAM core domain in the interval 130-379 (EEGRGTLCIS…IRTPRGRDIL (250 aa)). The cysteines at positions 137 and 382 are disulfide-linked. Residues Cys144, Cys148, and Cys151 each contribute to the [4Fe-4S] cluster site. Residues 208 to 209 (GE), Ser240, 262 to 264 (SLH), and Asn339 each bind S-adenosyl-L-methionine. The S-methylcysteine intermediate role is filled by Cys382.

It belongs to the radical SAM superfamily. RlmN family. [4Fe-4S] cluster is required as a cofactor.

It localises to the cytoplasm. It catalyses the reaction adenosine(2503) in 23S rRNA + 2 reduced [2Fe-2S]-[ferredoxin] + 2 S-adenosyl-L-methionine = 2-methyladenosine(2503) in 23S rRNA + 5'-deoxyadenosine + L-methionine + 2 oxidized [2Fe-2S]-[ferredoxin] + S-adenosyl-L-homocysteine. The catalysed reaction is adenosine(37) in tRNA + 2 reduced [2Fe-2S]-[ferredoxin] + 2 S-adenosyl-L-methionine = 2-methyladenosine(37) in tRNA + 5'-deoxyadenosine + L-methionine + 2 oxidized [2Fe-2S]-[ferredoxin] + S-adenosyl-L-homocysteine. Functionally, specifically methylates position 2 of adenine 2503 in 23S rRNA and position 2 of adenine 37 in tRNAs. m2A2503 modification seems to play a crucial role in the proofreading step occurring at the peptidyl transferase center and thus would serve to optimize ribosomal fidelity. This chain is Dual-specificity RNA methyltransferase RlmN, found in Rhizobium meliloti (strain 1021) (Ensifer meliloti).